Here is a 104-residue protein sequence, read N- to C-terminus: Large ribosomal subunit protein uL24 (104 aa).

It belongs to the universal ribosomal protein uL24 family. Part of the 50S ribosomal subunit.

Functionally, one of two assembly initiator proteins, it binds directly to the 5'-end of the 23S rRNA, where it nucleates assembly of the 50S subunit. In terms of biological role, one of the proteins that surrounds the polypeptide exit tunnel on the outside of the subunit. This is Large ribosomal subunit protein uL24 from Enterobacter sp. (strain 638).